We begin with the raw amino-acid sequence, 951 residues long: Valine--tRNA ligase (951 aa).

The 'HIGH' region signature appears at 42 to 52 (PNVTGSLHMGH). Residues 554–558 (KMSKS) carry the 'KMSKS' region motif. Lys-557 serves as a coordination point for ATP. Positions 882–944 (LINKDDELAR…AEAKAKLIEQ (63 aa)) form a coiled coil.

This sequence belongs to the class-I aminoacyl-tRNA synthetase family. ValS type 1 subfamily. As to quaternary structure, monomer.

The protein localises to the cytoplasm. The catalysed reaction is tRNA(Val) + L-valine + ATP = L-valyl-tRNA(Val) + AMP + diphosphate. Catalyzes the attachment of valine to tRNA(Val). As ValRS can inadvertently accommodate and process structurally similar amino acids such as threonine, to avoid such errors, it has a 'posttransfer' editing activity that hydrolyzes mischarged Thr-tRNA(Val) in a tRNA-dependent manner. In Salmonella choleraesuis (strain SC-B67), this protein is Valine--tRNA ligase.